A 315-amino-acid chain; its full sequence is Ribose-phosphate pyrophosphokinase (315 aa).

ATP contacts are provided by residues 37 to 39 and 96 to 97; these read DGE and RQ. Residues H131 and D170 each contribute to the Mg(2+) site. K194 is a catalytic residue. Residues R196, D220, and 224–228 contribute to the D-ribose 5-phosphate site; that span reads DTGGT.

Belongs to the ribose-phosphate pyrophosphokinase family. Class I subfamily. As to quaternary structure, homohexamer. Requires Mg(2+) as cofactor.

It is found in the cytoplasm. It carries out the reaction D-ribose 5-phosphate + ATP = 5-phospho-alpha-D-ribose 1-diphosphate + AMP + H(+). It participates in metabolic intermediate biosynthesis; 5-phospho-alpha-D-ribose 1-diphosphate biosynthesis; 5-phospho-alpha-D-ribose 1-diphosphate from D-ribose 5-phosphate (route I): step 1/1. Functionally, involved in the biosynthesis of the central metabolite phospho-alpha-D-ribosyl-1-pyrophosphate (PRPP) via the transfer of pyrophosphoryl group from ATP to 1-hydroxyl of ribose-5-phosphate (Rib-5-P). The polypeptide is Ribose-phosphate pyrophosphokinase (Escherichia coli O6:H1 (strain CFT073 / ATCC 700928 / UPEC)).